The primary structure comprises 240 residues: uncharacterized protein (240 aa).

The protein resides in the mitochondrion. This is an uncharacterized protein from Arabidopsis thaliana (Mouse-ear cress).